The sequence spans 173 residues: MAASGELVPCSVYFCGSIRGGREDQALYSRIVSRLRRYGKVLTEHVADAELEPRGEEAAGGDQFIHERDLAWLRQADVVVAEVTQPSLGVGYELGRAVALGKPILCLFRPQSGRVLSAMIRGAADGSRFQVWDYAEEEVETMLHRYFEAYLPQGTASSSNPSACLNPTVLEKI.

Position 2 is an N-acetylalanine (alanine 2). Glycine 16 contacts 5-hydroxymethyl-dUMP. At serine 17 the chain carries Phosphoserine. 5-hydroxymethyl-dUMP-binding residues include isoleucine 18, arginine 19, glycine 20, serine 87, glycine 89, and glutamate 93. At serine 87 the chain carries Phosphoserine. 4 positions are modified to phosphoserine: serine 112, serine 117, serine 127, and serine 158. Serine 117 serves as a coordination point for 5-hydroxymethyl-dUMP.

It belongs to the 2'-deoxynucleoside 5'-phosphate N-hydrolase 1 family. As to quaternary structure, monomer and homodimer.

It is found in the cytoplasm. Its subcellular location is the nucleus. It catalyses the reaction 5-hydroxymethyl-dUMP + H2O = 5-hydroxymethyluracil + 2-deoxy-D-ribose 5-phosphate. Functionally, part of a nucleotide salvage pathway that eliminates epigenetically modified 5-hydroxymethyl-dCMP (hmdCMP) in a two-step process entailing deamination to cytotoxic 5-hydroxymethyl-dUMP (hmdUMP), followed by its hydrolysis into 5-hydroxymethyluracil (hmU) and 2-deoxy-D-ribose 5-phosphate (deoxyribosephosphate). Catalyzes the second step in that pathway, the hydrolysis of the N-glycosidic bond in hmdUMP, degrading this cytotoxic nucleotide to avoid its genomic integration. In Mus musculus (Mouse), this protein is 5-hydroxymethyl-dUMP N-hydrolase.